Consider the following 573-residue polypeptide: 3-(3-hydroxy-phenyl)propionate/3-hydroxycinnamic acid hydroxylase (573 aa).

Residues 18-47 (DVVI…IVEE) and 283-293 (FRKGRMFLAGD) contribute to the FAD site.

Belongs to the PheA/TfdB FAD monooxygenase family. FAD is required as a cofactor.

The catalysed reaction is 3-(3-hydroxyphenyl)propanoate + NADH + O2 + H(+) = 3-(2,3-dihydroxyphenyl)propanoate + NAD(+) + H2O. The enzyme catalyses (2E)-3-(3-hydroxyphenyl)prop-2-enoate + NADH + O2 + H(+) = (2E)-3-(2,3-dihydroxyphenyl)prop-2-enoate + NAD(+) + H2O. The protein operates within aromatic compound metabolism; 3-phenylpropanoate degradation. Catalyzes the insertion of one atom of molecular oxygen into position 2 of the phenyl ring of 3-(3-hydroxyphenyl)propionate (3-HPP) and hydroxycinnamic acid (3HCI). This chain is 3-(3-hydroxy-phenyl)propionate/3-hydroxycinnamic acid hydroxylase, found in Mycobacterium sp. (strain KMS).